The chain runs to 352 residues: Peptide chain release factor 1 (352 aa).

At glutamine 233 the chain carries N5-methylglutamine. The tract at residues 288–309 is disordered; that stretch reads NAKDRKEQVGSGDRSERIRTYN. A compositionally biased stretch (basic and acidic residues) spans 289-306; that stretch reads AKDRKEQVGSGDRSERIR.

The protein belongs to the prokaryotic/mitochondrial release factor family. Post-translationally, methylated by PrmC. Methylation increases the termination efficiency of RF1.

It is found in the cytoplasm. In terms of biological role, peptide chain release factor 1 directs the termination of translation in response to the peptide chain termination codons UAG and UAA. In Helicobacter pylori (strain ATCC 700392 / 26695) (Campylobacter pylori), this protein is Peptide chain release factor 1 (prfA).